A 96-amino-acid polypeptide reads, in one-letter code: Small ribosomal subunit protein bS6 (96 aa).

The protein belongs to the bacterial ribosomal protein bS6 family.

In terms of biological role, binds together with bS18 to 16S ribosomal RNA. The chain is Small ribosomal subunit protein bS6 from Carboxydothermus hydrogenoformans (strain ATCC BAA-161 / DSM 6008 / Z-2901).